The primary structure comprises 232 residues: Sugar fermentation stimulation protein homolog (232 aa).

This sequence belongs to the SfsA family.

The chain is Sugar fermentation stimulation protein homolog from Moorella thermoacetica (strain ATCC 39073 / JCM 9320).